A 458-amino-acid polypeptide reads, in one-letter code: MSKDKLWGGRFTQPTDKFVEEFTASINFDKRLYHQDIRGSIAHATMLGKQGIIPIADVENIVSGLKAILEQIEAGKFDFSVSLEDIHMNIEARLSEKIGDAGKRLHTGRSRNDQVALDIRLYLRDELVEVSAYIDLLIDSIIHQAEENLGVIMPGFTHLQTAQPILFSHHMMAYHEMLKRDKARMEDCLKRTNVLPLGAGALAGTTFPIDREYVAELLDFAEVTRNSLDSVSDRDFAMEFCAASSILMVHLSRFSEELILWSTSEFKFVELSDSFCTGSSIMPQKKNPDVPELVRGKTGRVNGNLVALLTLMKSLPLAYNKDMQEDKEPLFDTIDTVKGCLKVFADMVREMKINPERMEVAAAAGFSTATDVADYLVRKGIPFRDAHEIVGKTVRYCIENEIDIPELSLAEWQLFSGRIEEDIFESITLEASVNARRATGGTALERVRAEIARAKEGR.

The protein belongs to the lyase 1 family. Argininosuccinate lyase subfamily.

It is found in the cytoplasm. The enzyme catalyses 2-(N(omega)-L-arginino)succinate = fumarate + L-arginine. It participates in amino-acid biosynthesis; L-arginine biosynthesis; L-arginine from L-ornithine and carbamoyl phosphate: step 3/3. In Geobacter sp. (strain M21), this protein is Argininosuccinate lyase.